Consider the following 192-residue polypeptide: 7-methyl-GTP pyrophosphatase (192 aa).

Residue Asp-69 is the Proton acceptor of the active site.

This sequence belongs to the Maf family. YceF subfamily. Requires a divalent metal cation as cofactor.

It is found in the cytoplasm. The catalysed reaction is N(7)-methyl-GTP + H2O = N(7)-methyl-GMP + diphosphate + H(+). Its function is as follows. Nucleoside triphosphate pyrophosphatase that hydrolyzes 7-methyl-GTP (m(7)GTP). May have a dual role in cell division arrest and in preventing the incorporation of modified nucleotides into cellular nucleic acids. This chain is 7-methyl-GTP pyrophosphatase, found in Pseudomonas aeruginosa (strain ATCC 15692 / DSM 22644 / CIP 104116 / JCM 14847 / LMG 12228 / 1C / PRS 101 / PAO1).